The chain runs to 338 residues: Acetylcholinesterase (338 aa).

N8 is a glycosylation site (N-linked (GlcNAc...) asparagine). S99 functions as the Acyl-ester intermediate in the catalytic mechanism. A disulfide bridge connects residues C153 and C164. The active-site Charge relay system is the E226.

Belongs to the type-B carboxylesterase/lipase family.

The protein resides in the synapse. It is found in the secreted. Its subcellular location is the cell membrane. It catalyses the reaction acetylcholine + H2O = choline + acetate + H(+). Functionally, terminates signal transduction at the neuromuscular junction by rapid hydrolysis of the acetylcholine released into the synaptic cleft. The polypeptide is Acetylcholinesterase (ache) (Myxine glutinosa (Atlantic hagfish)).